A 195-amino-acid chain; its full sequence is Dual-action ribosomal maturation protein DarP (195 aa).

It belongs to the DarP family.

The protein localises to the cytoplasm. In terms of biological role, member of a network of 50S ribosomal subunit biogenesis factors which assembles along the 30S-50S interface, preventing incorrect 23S rRNA structures from forming. Promotes peptidyl transferase center (PTC) maturation. This Stenotrophomonas maltophilia (strain K279a) protein is Dual-action ribosomal maturation protein DarP.